Here is a 3432-residue protein sequence, read N- to C-terminus: Genome polyprotein (3432 aa).

Residues 2-15 are interaction with host EXOC1; the sequence is TKKPGGPGKNRAIN. The Cytoplasmic segment spans residues 2–109; the sequence is TKKPGGPGKN…KKQNKRGGNE (108 aa). Positions 37–72 are hydrophobic; homodimerization of capsid protein C; sequence LLDGRGPVRFVLALITFFKFTALAPTKALLGRWRAV. The propeptide at 106 to 127 is ER anchor for the capsid protein C, removed in mature form by serine protease NS3; sequence GGNESSIMWLASLAIVIACAGA. The chain crosses the membrane as a helical span at residues 110 to 130; the sequence is SSIMWLASLAIVIACAGAMKL. Topologically, residues 131-253 are extracellular; sequence SNFQGKLLMT…ATRYLMKTEN (123 aa). N-linked (GlcNAc...) asparagine; by host glycosylation occurs at Asn142. Residues 254-274 form a helical membrane-spanning segment; it reads WIIRNPGYAFLAAALGWMLGS. Residues 275–279 are Cytoplasmic-facing; it reads NSGQR. A helical transmembrane segment spans residues 280 to 294; sequence VVFTILLLLVAPAYS. Residues 295–746 lie on the Extracellular side of the membrane; the sequence is FNCLGMGNRD…QVFGGAFRTL (452 aa). Intrachain disulfides connect Cys297–Cys324, Cys354–Cys410, Cys354–Cys415, Cys368–Cys399, Cys386–Cys410, and Cys386–Cys415. Residues 392–405 are fusion peptide; that stretch reads DRGWGNGCGLFGKG. The N-linked (GlcNAc...) asparagine; by host glycan is linked to Asn448. Disulfide bonds link Cys484/Cys581 and Cys598/Cys629. The helical transmembrane segment at 747–767 threads the bilayer; that stretch reads FGGMSWITQGLMGALLLWMGV. Residues 768–773 are Cytoplasmic-facing; that stretch reads NARDRS. The helical transmembrane segment at 774–794 threads the bilayer; it reads IALAFLATGGVLVFLATNVHA. Topologically, residues 795 to 1219 are extracellular; it reads DTGCAIDITR…AFAEANSGGD (425 aa). Disulfide bonds link Cys798/Cys809, Cys849/Cys937, Cys973/Cys1017, Cys1074/Cys1123, Cys1085/Cys1106, and Cys1107/Cys1110. N-linked (GlcNAc...) asparagine; by host glycans are attached at residues Asn924 and Asn1001. Residues 1220-1240 traverse the membrane as a helical segment; that stretch reads VLHLALIAVFKIQPAFLVMNM. Over 1241 to 1250 the chain is Cytoplasmic; sequence LSARWTNQEN. A helical membrane pass occupies residues 1251-1271; the sequence is MVLVLGAAFFQLASVDLQIGV. Position 1272 (His1272) is a topological domain, lumenal. A helical membrane pass occupies residues 1273–1293; the sequence is GILNAAAIAWMIVRAITFPTT. The Cytoplasmic portion of the chain corresponds to 1294 to 1309; sequence STVAMPVLALLTPGMR. The helical transmembrane segment at 1310–1330 threads the bilayer; it reads ALYLDTYRIILLVIGICSLLQ. Residues 1331–1341 lie on the Lumenal side of the membrane; it reads ERRKTMAKKKG. A helical transmembrane segment spans residues 1342-1362; the sequence is AVLLGLALTSTGWFSPTTIAA. Residues 1363–1374 lie on the Cytoplasmic side of the membrane; sequence GLMVCNPNKKRG. A helical transmembrane segment spans residues 1375-1395; it reads WPATEFLSAVGLMFAIVGGLA. The Lumenal segment spans residues 1396–1398; the sequence is ELD. A helical membrane pass occupies residues 1399–1419; it reads IESMSIPFMLAGLMAVSYVIS. Over 1420 to 1476 the chain is Cytoplasmic; it reads GKATDMWLDRAADISWEMEAAITGSSRRLDVKLDDDGDFHLIDDPGVPWKVWLLRMS. The interacts with and activates NS3 protease stretch occupies residues 1427–1466; the sequence is LDRAADISWEMEAAITGSSRRLDVKLDDDGDFHLIDDPGV. Residues 1477-1497 constitute an intramembrane region (helical); the sequence is CIGLAALTPWAIVPAAFGYWL. Over 1498-2173 the chain is Cytoplasmic; that stretch reads TLKTTKRGGV…RMALEELPDA (676 aa). Residues 1505 to 1682 form the Peptidase S7 domain; that stretch reads GGVFWDTPSP…DRQEEPVPDA (178 aa). Active-site charge relay system; for serine protease NS3 activity residues include His1555, Asp1579, and Ser1639. The Helicase ATP-binding domain maps to 1685–1841; that stretch reads PSMLKKRQMT…DSNAPIHDLQ (157 aa). Positions 1689 to 1692 are important for RNA-binding; the sequence is KKRQ. 1698–1705 serves as a coordination point for ATP; that stretch reads LHPGSGKT. Residues 1789-1792 carry the DEAH box motif; the sequence is DEAH. The region spanning 1852–2017 is the Helicase C-terminal domain; the sequence is GYEWITEYAG…GLVAQLYGPE (166 aa). At Lys1893 the chain carries N6-acetyllysine; by host. The tract at residues 1950–1969 is disordered; sequence NPSPITSASAAQRRGRVGRN. The regulates the ATPase activity of NS3 helicase stretch occupies residues 2168–2172; that stretch reads EELPD. A helical membrane pass occupies residues 2174–2194; that stretch reads LETITLIVAITVMTGGFFLLM. The Lumenal segment spans residues 2195–2199; it reads MQRKG. Residues 2200-2220 constitute an intramembrane region (helical); sequence IGKMGLGALVLTLATFFLWAA. Glu2221 is a topological domain (lumenal). Residues 2222-2242 form a helical membrane-spanning segment; the sequence is VPGTKIAGTLLVALLLMVVLI. Residues 2243–2257 lie on the Cytoplasmic side of the membrane; sequence PEPEKQRSQTDNQLA. The helical transmembrane segment at 2258–2278 threads the bilayer; the sequence is VFLICVLTVVGVVAANEYGML. Residues 2279–2311 are Lumenal-facing; sequence EKTKADLKSMFGGRTQAPGLTGLPSMALDLRPA. An intramembrane region (helical) is located at residues 2312–2332; the sequence is TAWALYGGSTVVLTPLLKHLI. Residues 2333–2368 lie on the Lumenal side of the membrane; that stretch reads TSEYVTTSLASISSQAGSLFVLPRGVPFTDLDLTVG. The chain crosses the membrane as a helical span at residues 2369–2389; that stretch reads LVFLGCWGQITLTTFLTAMVL. The Cytoplasmic segment spans residues 2390–2444; the sequence is VTLHYGYMLPGWQAEALRAAQRRTAAGIMKNAVVDGMVATDVPELERTTPLMQKK. Residues 2445 to 2465 traverse the membrane as a helical segment; the sequence is VGQVLLIGVSVAAFLVNPNVT. At 2466-2469 the chain is on the lumenal side; it reads TVRE. Residues 2470–2490 traverse the membrane as a helical segment; it reads AGVLVTAATLTLWDNGASAVW. At 2491–3432 the chain is on the cytoplasmic side; that stretch reads NSTTATGLCH…DVLIQEDRVI (942 aa). The 266-residue stretch at 2528–2793 folds into the mRNA cap 0-1 NS5-type MT domain; it reads GRPGGRTLGE…DVNLGSGTRA (266 aa). Ser2583 contacts S-adenosyl-L-methionine. The residue at position 2583 (Ser2583) is a Phosphoserine. Lys2588 acts as the For 2'-O-MTase activity in catalysis. The S-adenosyl-L-methionine site is built by Gly2613, Trp2614, Thr2631, Lys2632, Asp2658, and Val2659. Asp2673 (for 2'-O-MTase activity) is an active-site residue. An S-adenosyl-L-methionine-binding site is contributed by Ile2674. Residues Lys2709 and Glu2745 each act as for 2'-O-MTase activity in the active site. Tyr2747 is a binding site for S-adenosyl-L-methionine. 4 residues coordinate Zn(2+): Glu2967, His2971, Cys2976, and Cys2979. The RdRp catalytic domain occupies 3057–3209; sequence GKMYADDTAG…KPLDDRFATA (153 aa). Residues His3244, Cys3260, and Cys3379 each contribute to the Zn(2+) site.

The protein in the N-terminal section; belongs to the class I-like SAM-binding methyltransferase superfamily. mRNA cap 0-1 NS5-type methyltransferase family. As to quaternary structure, homodimer. Interacts (via N-terminus) with host EXOC1 (via C-terminus); this interaction results in EXOC1 degradation through the proteasome degradation pathway. In terms of assembly, forms heterodimers with envelope protein E in the endoplasmic reticulum and Golgi. Homodimer; in the endoplasmic reticulum and Golgi. Interacts with protein prM. Interacts with non-structural protein 1. Interacts with host HSPA5. As to quaternary structure, homodimer; Homohexamer when secreted. Interacts with envelope protein E. NS1 interacts with NS4B. Interacts with host complement protein CFH; this interaction leads to the degradation of C3. In terms of assembly, interacts (via N-terminus) with serine protease NS3. Forms a heterodimer with serine protease NS3. May form homooligomers. As to quaternary structure, forms a heterodimer with NS2B. Interacts with non-structural protein 2A (via N-terminus). Interacts with NS4B. Interacts with unphosphorylated RNA-directed RNA polymerase NS5; this interaction stimulates RNA-directed RNA polymerase NS5 guanylyltransferase activity. Interacts with host ILF2. In terms of assembly, interacts with serine protease NS3. Homodimer. Interacts with host STAT2; this interaction inhibits the phosphorylation of the latter, and, when all viral proteins are present (polyprotein), targets STAT2 for degradation. Interacts with serine protease NS3. Mn(2+) is required as a cofactor. Requires Mg(2+) as cofactor. In terms of processing, specific enzymatic cleavages in vivo yield mature proteins. Cleavages in the lumen of endoplasmic reticulum are performed by host signal peptidase, whereas cleavages in the cytoplasmic side are performed by serine protease NS3. Signal cleavage at the 2K-4B site requires a prior NS3 protease-mediated cleavage at the 4A-2K site. Cleaved in post-Golgi vesicles by a host furin, releasing the mature small envelope protein M, and peptide pr. This cleavage is incomplete as up to 30% of viral particles still carry uncleaved prM. Post-translationally, N-glycosylated. In terms of processing, N-glycosylated. The excreted form is glycosylated and this is required for efficient secretion of the protein from infected cells. Acetylated by host KAT5. Acetylation modulates NS3 RNA-binding and unwinding activities and plays an important positive role for viral replication. Post-translationally, phosphorylated on serines residues. This phosphorylation may trigger NS5 nuclear localization.

Its subcellular location is the host endoplasmic reticulum membrane. The protein localises to the virion. It is found in the host nucleus. It localises to the host cytoplasm. The protein resides in the host perinuclear region. Its subcellular location is the secreted. The protein localises to the virion membrane. It is found in the host cell surface. It catalyses the reaction Selective hydrolysis of -Xaa-Xaa-|-Yaa- bonds in which each of the Xaa can be either Arg or Lys and Yaa can be either Ser or Ala.. The enzyme catalyses a ribonucleoside 5'-triphosphate + H2O = a ribonucleoside 5'-diphosphate + phosphate + H(+). The catalysed reaction is RNA(n) + a ribonucleoside 5'-triphosphate = RNA(n+1) + diphosphate. It carries out the reaction ATP + H2O = ADP + phosphate + H(+). It catalyses the reaction a 5'-end (5'-triphosphoguanosine)-ribonucleoside in mRNA + S-adenosyl-L-methionine = a 5'-end (N(7)-methyl 5'-triphosphoguanosine)-ribonucleoside in mRNA + S-adenosyl-L-homocysteine. The enzyme catalyses a 5'-end (N(7)-methyl 5'-triphosphoguanosine)-ribonucleoside in mRNA + S-adenosyl-L-methionine = a 5'-end (N(7)-methyl 5'-triphosphoguanosine)-(2'-O-methyl-ribonucleoside) in mRNA + S-adenosyl-L-homocysteine + H(+). Its function is as follows. Plays a role in virus budding by binding to the cell membrane and gathering the viral RNA into a nucleocapsid that forms the core of a mature virus particle. During virus entry, may induce genome penetration into the host cytoplasm after hemifusion induced by the surface proteins. Can migrate to the cell nucleus where it modulates host functions. Overcomes the anti-viral effects of host EXOC1 by sequestering and degrading the latter through the proteasome degradation pathway. In terms of biological role, inhibits RNA silencing by interfering with host Dicer. Functionally, prevents premature fusion activity of envelope proteins in trans-Golgi by binding to envelope protein E at pH6.0. After virion release in extracellular space, gets dissociated from E dimers. Acts as a chaperone for envelope protein E during intracellular virion assembly by masking and inactivating envelope protein E fusion peptide. prM is the only viral peptide matured by host furin in the trans-Golgi network probably to avoid catastrophic activation of the viral fusion activity in acidic Golgi compartment prior to virion release. prM-E cleavage is inefficient, and many virions are only partially matured. These uncleaved prM would play a role in immune evasion. Its function is as follows. May play a role in virus budding. Exerts cytotoxic effects by activating a mitochondrial apoptotic pathway through M ectodomain. May display a viroporin activity. In terms of biological role, binds to host cell surface receptor and mediates fusion between viral and cellular membranes. Efficient virus attachment to cell is, at least in part, mediated by host HSPA5. Envelope protein is synthesized in the endoplasmic reticulum in the form of heterodimer with protein prM. They play a role in virion budding in the ER, and the newly formed immature particle is covered with 60 spikes composed of heterodimer between precursor prM and envelope protein E. The virion is transported to the Golgi apparatus where the low pH causes dissociation of PrM-E heterodimers and formation of E homodimers. prM-E cleavage is inefficient, and many virions are only partially matured. These uncleaved prM would play a role in immune evasion. Functionally, involved in immune evasion, pathogenesis and viral replication. Once cleaved off the polyprotein, is targeted to three destinations: the viral replication cycle, the plasma membrane and the extracellular compartment. Essential for viral replication. Required for formation of the replication complex and recruitment of other non-structural proteins to the ER-derived membrane structures. Excreted as a hexameric lipoparticle that plays a role against host immune response. Antagonizing the complement function. Binds to the host macrophages and dendritic cells. Inhibits signal transduction originating from Toll-like receptor 3 (TLR3). Component of the viral RNA replication complex that functions in virion assembly and antagonizes the host alpha/beta interferon antiviral response. Its function is as follows. Required cofactor for the serine protease function of NS3. May have membrane-destabilizing activity and form viroporins. In terms of biological role, displays three enzymatic activities: serine protease, NTPase and RNA helicase. NS3 serine protease, in association with NS2B, performs its autocleavage and cleaves the polyprotein at dibasic sites in the cytoplasm: C-prM, NS2A-NS2B, NS2B-NS3, NS3-NS4A, NS4A-2K and NS4B-NS5. NS3 RNA helicase binds RNA and unwinds dsRNA in the 3' to 5' direction. Functionally, regulates the ATPase activity of the NS3 helicase activity. NS4A allows NS3 helicase to conserve energy during unwinding. Functions as a signal peptide for NS4B and is required for the interferon antagonism activity of the latter. Its function is as follows. Induces the formation of ER-derived membrane vesicles where the viral replication takes place. Inhibits interferon (IFN)-induced host STAT1 phosphorylation and nuclear translocation, thereby preventing the establishment of cellular antiviral state by blocking the IFN-alpha/beta pathway. Inhibits STAT2 translocation in the nucleus after IFN-alpha treatment. In terms of biological role, replicates the viral (+) and (-) RNA genome. Performs the capping of genomes in the cytoplasm. NS5 methylates viral RNA cap at guanine N-7 and ribose 2'-O positions. Besides its role in RNA genome replication, also prevents the establishment of cellular antiviral state by blocking the interferon-alpha/beta (IFN-alpha/beta) signaling pathway. Inhibits host TYK2 and STAT2 phosphorylation, thereby preventing activation of JAK-STAT signaling pathway. This is Genome polyprotein from Japanese encephalitis virus (strain M28) (JEV).